Here is a 268-residue protein sequence, read N- to C-terminus: DNA ligase (268 aa).

Residue Lys41 is the N6-AMP-lysine intermediate of the active site. The ATP site is built by Phe111, Arg181, and Lys187.

It belongs to the ATP-dependent DNA ligase family. Requires a divalent metal cation as cofactor.

The enzyme catalyses ATP + (deoxyribonucleotide)n-3'-hydroxyl + 5'-phospho-(deoxyribonucleotide)m = (deoxyribonucleotide)n+m + AMP + diphosphate.. In terms of biological role, catalyzes efficient strand joining on a single nicked DNA. This Haemophilus influenzae (strain ATCC 51907 / DSM 11121 / KW20 / Rd) protein is DNA ligase (ligA).